Here is a 1493-residue protein sequence, read N- to C-terminus: DNA excision repair protein ERCC-6 (1493 aa).

The tract at residues 1 to 39 is disordered; that stretch reads MPNEGIPHSSQTQEQDCLQSQPVSNNEEMAIKQESGGDG. The tract at residues 1–510 is N-terminal domain; essential for its chromatin remodeling activity; the sequence is MPNEGIPHSS…GFLFKKLFKY (510 aa). Polar residues predominate over residues 8 to 27; sequence HSSQTQEQDCLQSQPVSNNE. S10 is modified (phosphoserine; by ATM). S158 carries the post-translational modification Phosphoserine; by CDK2. K170 carries the post-translational modification N6-methylated lysine; by EHMT2. K205 participates in a covalent cross-link: Glycyl lysine isopeptide (Lys-Gly) (interchain with G-Cter in SUMO3). K255 participates in a covalent cross-link: Glycyl lysine isopeptide (Lys-Gly) (interchain with G-Cter in SUMO2). Disordered regions lie at residues 287–323 and 344–453; these read KQGC…VLSK and GKVG…GRYR. K297 is subject to N6-methylated lysine; by EHMT2. Over residues 353–363 the composition is skewed to basic and acidic residues; that stretch reads RPWESDMRPEA. The segment covering 364-392 has biased composition (acidic residues); the sequence is EGDSEGEESEYFPTEEEEEEEDDEVEGAE. Residues S429 and S430 each carry the phosphoserine modification. K448 bears the N6-methylated lysine; by EHMT2 mark. S486 and S489 each carry phosphoserine. The Helicase ATP-binding domain maps to 519-695; that stretch reads WELHCQQAGG…WSLFDFIFPG (177 aa). 532–539 lines the ATP pocket; sequence DEMGLGKT. Positions 646–649 match the DEAH box motif; it reads DEGH. In terms of domain architecture, Helicase C-terminal spans 843-1002; that stretch reads VVESLLKIWH…RRFFKSNDLY (160 aa). Disordered stretches follow at residues 1042–1147, 1181–1247, and 1318–1384; these read PAFG…DESI, HKSK…EQSN, and RGIS…SGPL. K1054 carries the N6-methylated lysine; by EHMT2 modification. Polar residues predominate over residues 1123 to 1141; sequence ISGNGECSNSSGTGKTSMP. At S1142 the chain carries Phosphoserine. Residues 1200-1210 show a composition bias toward basic residues; sequence LRPKQKPKNSK. Basic and acidic residues-rich tracts occupy residues 1211–1221 and 1232–1247; these read HCRDAKFEGTR and QKQD…EQSN. Residues 1327–1336 are compositionally biased toward basic residues; the sequence is KKSRFGKKRN. The span at 1337 to 1351 shows a compositional bias: polar residues; sequence SNFSVQHPSSTSPTE. The residue at position 1348 (S1348) is a Phosphoserine. Basic and acidic residues predominate over residues 1352 to 1376; that stretch reads KCQDGIMKKEGKDNVPEHFSGRAED. A CSA-interacting motif (CIM) motif is present at residues 1386 to 1398; the sequence is SSSLLAKMRARNH. A ubiquitin-binding domain (UBD) region spans residues 1400–1428; that stretch reads ILPERLESESGHLQEASALLPTTEHDDLL. The segment at 1429-1493 is winged-helix domain (WHD); the sequence is VEMRNFIAFQ…GIWKLKPEYC (65 aa). Residues 1446–1493 are essential for its interaction with RNA polymerase II, transcription-coupled nucleotide excision repair activity, association with chromatin after UV irradiation and for mediating the UV-induced translocation of ERRC8 to the nuclear matrix; that stretch reads STREILQEFESKLSASQSCVFRELLRNLCTFHRTSGGEGIWKLKPEYC.

It belongs to the SNF2/RAD54 helicase family. As to quaternary structure, homodimer. Binds DNA. Interacts with ERCC8. Interacts with RNA polymerase II; interaction is enhanced by UV irradiation. Component of the B-WICH complex, at least composed of SMARCA5/SNF2H, BAZ1B/WSTF, SF3B1, DEK, MYO1C, ERCC6, MYBBP1A and DDX21. Interacts with KIAA1530/UVSSA. Interacts with ELOA and CUL5; the interaction is induced by DNA damaging agents or by inhibitors of RNA polymerase II elongation. Interacts (via WHD region) with RIF1. Interacts with SMARCC2/BAF170, SMARCB1/BAF47 and the neuron-specific chromatin remodeling complex (nBAF complex). Interacts with ERCC5/XPG (via C-terminus); the interaction stimulates ERCC6/CSB binding to the DNA repair bubble and ERCC6/CSB ATPase activity. May form a complex composed of RNA polymerase II, ERCC6/CSB and ERCC5/XPG which associates with the DNA repair bubble during transcription-coupled nucleotide excision repair. Interacts with CAND1, CSTF1, DDX3X, DDX5, DDX17, DDX23, DHX36, HDAC1, HNRNPU, MTA2, PRPF3, PSMD3, RBBP4, SFPQ, SMARCA1, SMARCA2, TOP1, USP7, XRCC5, COPS3, COPS4, COPS6, DDX1, DDX41, GATAD2A, GATAD2B, PRPF4, PSMC5, SF3B2, CTR9, NONO, PSMD12 and TOP2A. Post-translationally, phosphorylated in a cell cycle-dependent manner at Ser-158 by cyclin A-CDK2 and at Ser-10 by ATM in response to DNA damage. Phosphorylation at these two sites promotes the intramolecular interaction of the N-terminal domain with the helicase ATP-binding domain, thereby probably releasing the inhibitory effect of the N-terminal domain on its ATPase activity. Phosphorylation is essential for its chromatin remodeling activity. Ubiquitinated at the C-terminus. Ubiquitination by the CSA complex leads to ERCC6 proteasomal degradation in a UV-dependent manner. Stabilized following interaction with KIAA1530/UVSSA, which promotes recruitment of deubiquitinating enzyme USP7, leading to deubiquitination of ERCC6 thereby preventing UV-induced degradation of ERCC6 by the proteasome. In terms of processing, sumoylation at Lys-205 in an UV-radiation-dependent manner is essential for its transcription-coupled nucleotide excision repair activity.

It is found in the nucleus. Its subcellular location is the chromosome. It catalyses the reaction ATP + H2O = ADP + phosphate + H(+). In terms of biological role, essential factor involved in transcription-coupled nucleotide excision repair (TC-NER), a process during which RNA polymerase II-blocking lesions are rapidly removed from the transcribed strand of active genes. Plays a central role in the initiation of the TC-NER process: specifically recognizes and binds RNA polymerase II stalled at a lesion, and mediates recruitment of ERCC8/CSA, initiating DNA damage excision by TFIIH recruitment. Upon DNA-binding, it locally modifies DNA conformation by wrapping the DNA around itself, thereby modifying the interface between stalled RNA polymerase II and DNA. Acts as a chromatin remodeler at DSBs; DNA-dependent ATPase-dependent activity is essential for this function. Plays an important role in regulating the choice of the DNA double-strand breaks (DSBs) repair pathway and G2/M checkpoint activation; DNA-dependent ATPase activity is essential for this function. Regulates the DNA repair pathway choice by inhibiting non-homologous end joining (NHEJ), thereby promoting the homologous recombination (HR)-mediated repair of DSBs during the S/G2 phases of the cell cycle. Mediates the activation of the ATM- and CHEK2-dependent DNA damage responses thus preventing premature entry of cells into mitosis following the induction of DNA DSBs. Remodels chromatin by evicting histones from chromatin flanking DSBs, limiting RIF1 accumulation at DSBs thereby promoting BRCA1-mediated HR. Required for stable recruitment of ELOA and CUL5 to DNA damage sites. Also involved in UV-induced translocation of ERCC8 to the nuclear matrix. Essential for neuronal differentiation and neuritogenesis; regulates transcription and chromatin remodeling activities required during neurogenesis. The chain is DNA excision repair protein ERCC-6 from Homo sapiens (Human).